Consider the following 212-residue polypeptide: Uridine kinase (212 aa).

13-20 (GASASGKS) is an ATP binding site.

The protein belongs to the uridine kinase family.

It is found in the cytoplasm. The catalysed reaction is uridine + ATP = UMP + ADP + H(+). It catalyses the reaction cytidine + ATP = CMP + ADP + H(+). The protein operates within pyrimidine metabolism; CTP biosynthesis via salvage pathway; CTP from cytidine: step 1/3. It participates in pyrimidine metabolism; UMP biosynthesis via salvage pathway; UMP from uridine: step 1/1. The sequence is that of Uridine kinase from Shewanella putrefaciens (strain CN-32 / ATCC BAA-453).